A 98-amino-acid chain; its full sequence is Class II hydrophobin 2 (98 aa).

A signal peptide spans 1 to 21 (MFFSRISTIVSMTALFASALA). Intrachain disulfides connect C34–C80, C41–C71, C42–C54, and C81–C92.

This sequence belongs to the cerato-ulmin hydrophobin family.

The protein resides in the secreted. The protein localises to the cell wall. In terms of biological role, aerial growth, conidiation, and dispersal of filamentous fungi in the environment rely upon a capability of their secreting small amphipathic proteins called hydrophobins (HPBs) with low sequence identity. Class I can self-assemble into an outermost layer of rodlet bundles on aerial cell surfaces, conferring cellular hydrophobicity that supports fungal growth, development and dispersal; whereas Class II form highly ordered films at water-air interfaces through intermolecular interactions but contribute nothing to the rodlet structure. In Botryotinia fuckeliana, hydrophobins are not involved in conferring surface hydrophobicity to conidia and aerial hyphae and their function in sclerotia and fruiting bodies remains to be investigated. This is Class II hydrophobin 2 from Botryotinia fuckeliana (strain B05.10) (Noble rot fungus).